The chain runs to 129 residues: Transcription antitermination protein NusB (129 aa).

It belongs to the NusB family.

Functionally, involved in transcription antitermination. Required for transcription of ribosomal RNA (rRNA) genes. Binds specifically to the boxA antiterminator sequence of the ribosomal RNA (rrn) operons. The sequence is that of Transcription antitermination protein NusB from Staphylococcus epidermidis (strain ATCC 35984 / DSM 28319 / BCRC 17069 / CCUG 31568 / BM 3577 / RP62A).